Here is a 72-residue protein sequence, read N- to C-terminus: Translation initiation factor IF-1 (72 aa).

The 72-residue stretch at 1-72 folds into the S1-like domain; sequence MAKDDVIEVE…NRGRITYRFK (72 aa). Y60 bears the Phosphotyrosine mark.

Belongs to the IF-1 family. As to quaternary structure, component of the 30S ribosomal translation pre-initiation complex which assembles on the 30S ribosome in the order IF-2 and IF-3, IF-1 and N-formylmethionyl-tRNA(fMet); mRNA recruitment can occur at any time during PIC assembly.

The protein resides in the cytoplasm. Its function is as follows. One of the essential components for the initiation of protein synthesis. Stabilizes the binding of IF-2 and IF-3 on the 30S subunit to which N-formylmethionyl-tRNA(fMet) subsequently binds. Helps modulate mRNA selection, yielding the 30S pre-initiation complex (PIC). Upon addition of the 50S ribosomal subunit IF-1, IF-2 and IF-3 are released leaving the mature 70S translation initiation complex. The polypeptide is Translation initiation factor IF-1 (Bacillus thuringiensis (strain Al Hakam)).